Consider the following 145-residue polypeptide: Small ribosomal subunit protein uS12 (145 aa).

Proline 64 bears the Hydroxyproline mark.

This sequence belongs to the universal ribosomal protein uS12 family.

In Aspergillus fumigatus (strain ATCC MYA-4609 / CBS 101355 / FGSC A1100 / Af293) (Neosartorya fumigata), this protein is Small ribosomal subunit protein uS12 (rps23).